Consider the following 974-residue polypeptide: Translation initiation factor IF-2 (974 aa).

Residues 31-376 (FVKSASSTVE…APAVGGVRLP (346 aa)) are disordered. Positions 52–68 (PSAKSADSAARPAAKPG) are enriched in low complexity. Pro residues predominate over residues 83–96 (GPRPGPKPAAPAPA). Over residues 97 to 133 (APAAAAPAATPAAQAPAPAAPAASTATPAAPASNAPK) the composition is skewed to low complexity. Over residues 134-147 (PGRPTPAAPAPAAP) the composition is skewed to pro residues. Low complexity-rich tracts occupy residues 148-166 (AAPAAPAAASTPAAPSTGA) and 179-191 (RVGNNPYSSAPAE). 2 stretches are compositionally biased toward pro residues: residues 195–210 (PRPAPGAPRPGAPRPA) and 253–266 (RPSPGSMPPRPNPG). The span at 267–277 (AMPARSARPAP) shows a compositional bias: low complexity. The span at 279–332 (GRPGRPGGAPGGRPGGGGGGYRGGGAPGAGAGAPGGGAPAGGFRGRPGGGGRPG) shows a compositional bias: gly residues. Positions 349-358 (RRGRKSKRQK) are enriched in basic residues. Positions 470 to 641 (SRPPVVTVMG…AVLLTADAAL (172 aa)) constitute a tr-type G domain. A G1 region spans residues 479–486 (GHVDHGKT). A GTP-binding site is contributed by 479 to 486 (GHVDHGKT). The G2 stretch occupies residues 504-508 (GITQH). Positions 529 to 532 (DTPG) are G3. Residues 529 to 533 (DTPGH) and 583 to 586 (NKID) each bind GTP. Residues 583-586 (NKID) are G4. Residues 619-621 (SAK) are G5.

Belongs to the TRAFAC class translation factor GTPase superfamily. Classic translation factor GTPase family. IF-2 subfamily.

It localises to the cytoplasm. One of the essential components for the initiation of protein synthesis. Protects formylmethionyl-tRNA from spontaneous hydrolysis and promotes its binding to the 30S ribosomal subunits. Also involved in the hydrolysis of GTP during the formation of the 70S ribosomal complex. The polypeptide is Translation initiation factor IF-2 (Rhodococcus opacus (strain B4)).